Reading from the N-terminus, the 192-residue chain is Fumarylpyruvate hydrolase (192 aa).

A divalent metal cation-binding residues include glutamate 41, glutamate 43, and aspartate 72.

This sequence belongs to the FAH family. It depends on Mg(2+) as a cofactor. Mn(2+) serves as cofactor.

The catalysed reaction is 3-fumarylpyruvate + H2O = fumarate + pyruvate + H(+). Its pathway is aromatic compound metabolism; naphthalene degradation. In terms of biological role, involved in the catabolism of gentisate (2,5-dihydroxybenzoate) a key intermediates in the aerobic pathways for the metabolism of a large number of aromatic compoun such as naphthalene. Catalyzes the hydrolytic cleavage of fumarylpyruvate to form fumarate and pyruvate. The polypeptide is Fumarylpyruvate hydrolase (Ralstonia sp).